The sequence spans 245 residues: 1-(5-phosphoribosyl)-5-[(5-phosphoribosylamino)methylideneamino] imidazole-4-carboxamide isomerase (245 aa).

Asp-8 functions as the Proton acceptor in the catalytic mechanism. Residue Asp-131 is the Proton donor of the active site.

Belongs to the HisA/HisF family.

Its subcellular location is the cytoplasm. The catalysed reaction is 1-(5-phospho-beta-D-ribosyl)-5-[(5-phospho-beta-D-ribosylamino)methylideneamino]imidazole-4-carboxamide = 5-[(5-phospho-1-deoxy-D-ribulos-1-ylimino)methylamino]-1-(5-phospho-beta-D-ribosyl)imidazole-4-carboxamide. It functions in the pathway amino-acid biosynthesis; L-histidine biosynthesis; L-histidine from 5-phospho-alpha-D-ribose 1-diphosphate: step 4/9. This is 1-(5-phosphoribosyl)-5-[(5-phosphoribosylamino)methylideneamino] imidazole-4-carboxamide isomerase from Neisseria meningitidis serogroup C (strain 053442).